A 647-amino-acid chain; its full sequence is 5-aminolevulinate synthase, non-specific, mitochondrial (647 aa).

The N-terminal 56 residues, 1–56, are a transit peptide targeting the mitochondrion; sequence METVVRRCPFLSRVPQAFLQKAGKSLLFYAQNCPKMMEIGAKPAPRALSTSAVLCQ. The segment at 61–112 is disordered; it reads TPPANEKDKAAKAEVQQAPDGSQQAPDGSQQTADGTQLPSGHPSLASSQGTG. Residues 79 to 112 are compositionally biased toward polar residues; the sequence is PDGSQQAPDGSQQTADGTQLPSGHPSLASSQGTG. Arg224, Ser341, and Lys360 together coordinate substrate. 3 residues coordinate pyridoxal 5'-phosphate: Ser393, His421, and Thr449. The active site involves Lys452. Lys452 is subject to N6-(pyridoxal phosphate)lysine. Residues Thr481 and Thr482 each contribute to the pyridoxal 5'-phosphate site. Position 569 (Thr569) interacts with substrate. The residue at position 583 (Pro583) is a Hydroxyproline.

The protein belongs to the class-II pyridoxal-phosphate-dependent aminotransferase family. Homodimer. Interacts (hydroxylated form) with VHL. Requires pyridoxal 5'-phosphate as cofactor. In normoxia, is hydroxylated at Pro-583, promoting interaction with VHL, initiating ubiquitination and subsequent degradation via the proteasome. Post-translationally, ubiquitinated; in normoxia following hydroxylation and interaction with VHL, leading to its subsequent degradation via the proteasome.

It localises to the mitochondrion inner membrane. It carries out the reaction succinyl-CoA + glycine + H(+) = 5-aminolevulinate + CO2 + CoA. It functions in the pathway porphyrin-containing compound metabolism; protoporphyrin-IX biosynthesis; 5-aminolevulinate from glycine: step 1/1. Functionally, catalyzes the pyridoxal 5'-phosphate (PLP)-dependent condensation of succinyl-CoA and glycine to form aminolevulinic acid (ALA), with CoA and CO2 as by-products. The protein is 5-aminolevulinate synthase, non-specific, mitochondrial (ALAS1) of Bos taurus (Bovine).